The primary structure comprises 337 residues: Cysteinyl leukotriene receptor 1 (337 aa).

Residues 1–28 (MDETGNLTVSSATCHDTIDDFRNQVYST) lie on the Extracellular side of the membrane. N6 carries N-linked (GlcNAc...) asparagine glycosylation. A helical membrane pass occupies residues 29–49 (LYSMISVVGFFGNGFVLYVLI). Topologically, residues 50 to 57 (KTYHKKSA) are cytoplasmic. A helical membrane pass occupies residues 58–78 (FQVYMINLAVADLLCVCTLPL). The Extracellular segment spans residues 79–106 (RVVYYVHKGIWLFGDFLCRLSTYALYVN). Cysteines 96 and 173 form a disulfide. A helical membrane pass occupies residues 107-127 (LYCSIFFMTAMSFFRCIAIVF). The Cytoplasmic portion of the chain corresponds to 128–141 (PVQNINLVTQKKAR). A helical membrane pass occupies residues 142 to 162 (FVCVGIWIFVILTSSPFLMAK). Residues 163–193 (PQKDEKNNTKCFEPPQDNQTKNHVLVLHYVS) are Extracellular-facing. Residues N169 and N180 are each glycosylated (N-linked (GlcNAc...) asparagine). A helical membrane pass occupies residues 194–214 (LFVGFIIPFVIIIVCYTMIIL). Residues 215-230 (TLLKKSMKKNLSSHKK) lie on the Cytoplasmic side of the membrane. The helical transmembrane segment at 231 to 251 (AIGMIMVVTAAFLVSFMPYHI) threads the bilayer. At 252-276 (QRTIHLHFLHNETKPCDSVLRMQKS) the chain is on the extracellular side. N262 carries N-linked (GlcNAc...) asparagine glycosylation. Residues 277 to 297 (VVITLSLAASNCCFDPLLYFF) form a helical membrane-spanning segment. Residues 298–337 (SGGNFRKRLSTFRKHSLSSVTYVPRKKASLPEKGEEICKV) lie on the Cytoplasmic side of the membrane.

This sequence belongs to the G-protein coupled receptor 1 family. In terms of tissue distribution, widely expressed, with highest levels in spleen and peripheral blood leukocytes. Lower expression in several tissues, such as lung (mostly in smooth muscle bundles and alveolar macrophages), placenta, small intestine, pancreas, colon and heart.

The protein resides in the cell membrane. In terms of biological role, receptor for cysteinyl leukotrienes mediating bronchoconstriction of individuals with and without asthma. Stimulation by LTD4 results in the contraction and proliferation of smooth muscle, edema, eosinophil migration and damage to the mucus layer in the lung. This response is mediated via a G-protein that activates a phosphatidylinositol-calcium second messenger system. The rank order of affinities for the leukotrienes is LTD4 &gt;&gt; LTE4 = LTC4 &gt;&gt; LTB4. The chain is Cysteinyl leukotriene receptor 1 (CYSLTR1) from Homo sapiens (Human).